The sequence spans 454 residues: tRNA(Ile)-lysidine synthase (454 aa).

31-36 is an ATP binding site; sequence SGGADS.

Belongs to the tRNA(Ile)-lysidine synthase family.

Its subcellular location is the cytoplasm. It carries out the reaction cytidine(34) in tRNA(Ile2) + L-lysine + ATP = lysidine(34) in tRNA(Ile2) + AMP + diphosphate + H(+). Functionally, ligates lysine onto the cytidine present at position 34 of the AUA codon-specific tRNA(Ile) that contains the anticodon CAU, in an ATP-dependent manner. Cytidine is converted to lysidine, thus changing the amino acid specificity of the tRNA from methionine to isoleucine. The sequence is that of tRNA(Ile)-lysidine synthase from Porphyromonas gingivalis (strain ATCC 33277 / DSM 20709 / CIP 103683 / JCM 12257 / NCTC 11834 / 2561).